A 430-amino-acid chain; its full sequence is Enolase (430 aa).

Q164 provides a ligand contact to (2R)-2-phosphoglycerate. E208 functions as the Proton donor in the catalytic mechanism. Mg(2+)-binding residues include D245, E288, and D315. The (2R)-2-phosphoglycerate site is built by K340, R369, S370, and K391. K340 acts as the Proton acceptor in catalysis.

Belongs to the enolase family. Mg(2+) serves as cofactor.

The protein localises to the cytoplasm. The protein resides in the secreted. It is found in the cell surface. It carries out the reaction (2R)-2-phosphoglycerate = phosphoenolpyruvate + H2O. It functions in the pathway carbohydrate degradation; glycolysis; pyruvate from D-glyceraldehyde 3-phosphate: step 4/5. Functionally, catalyzes the reversible conversion of 2-phosphoglycerate (2-PG) into phosphoenolpyruvate (PEP). It is essential for the degradation of carbohydrates via glycolysis. The sequence is that of Enolase from Pyrococcus furiosus (strain ATCC 43587 / DSM 3638 / JCM 8422 / Vc1).